The sequence spans 189 residues: GTP cyclohydrolase 1 (189 aa).

Zn(2+) contacts are provided by Cys78, His81, and Cys150.

Belongs to the GTP cyclohydrolase I family. Toroid-shaped homodecamer, composed of two pentamers of five dimers.

It catalyses the reaction GTP + H2O = 7,8-dihydroneopterin 3'-triphosphate + formate + H(+). It functions in the pathway cofactor biosynthesis; 7,8-dihydroneopterin triphosphate biosynthesis; 7,8-dihydroneopterin triphosphate from GTP: step 1/1. This chain is GTP cyclohydrolase 1, found in Listeria monocytogenes serovar 1/2a (strain ATCC BAA-679 / EGD-e).